Consider the following 161-residue polypeptide: Phosphopantetheine adenylyltransferase (161 aa).

S9 serves as a coordination point for substrate. Residues 9-10 and H17 contribute to the ATP site; that span reads SF. Residues K41, T73, and R87 each contribute to the substrate site. ATP contacts are provided by residues 88-90, E98, and 123-129; these read GLR and YSFISST.

This sequence belongs to the bacterial CoaD family. Homohexamer. Requires Mg(2+) as cofactor.

It localises to the cytoplasm. The catalysed reaction is (R)-4'-phosphopantetheine + ATP + H(+) = 3'-dephospho-CoA + diphosphate. It participates in cofactor biosynthesis; coenzyme A biosynthesis; CoA from (R)-pantothenate: step 4/5. Reversibly transfers an adenylyl group from ATP to 4'-phosphopantetheine, yielding dephospho-CoA (dPCoA) and pyrophosphate. The sequence is that of Phosphopantetheine adenylyltransferase from Desulforamulus reducens (strain ATCC BAA-1160 / DSM 100696 / MI-1) (Desulfotomaculum reducens).